Consider the following 1496-residue polypeptide: Rap guanine nucleotide exchange factor 2 (1496 aa).

Disordered regions lie at residues 40-59 (HVSS…SSSL) and 68-101 (SEAG…SDPL). A compositionally biased stretch (acidic residues) spans 83–94 (VDSEDDDDEEDI). 135–254 (AFANMTMSVR…VEEEGEIVMV (120 aa)) is an a nucleoside 3',5'-cyclic phosphate binding site. Residues 267 to 380 (KGHIVIKGTS…RLLNIACAAK (114 aa)) enclose the N-terminal Ras-GEF domain. One can recognise a PDZ domain in the interval 385–470 (LMTLTKPSRE…ITVKTNLFVF (86 aa)). Serine 501 is modified (phosphoserine). One can recognise a Ras-associating domain in the interval 606–692 (PDQVLRVFKA…GRYYLKNNME (87 aa)). Threonine 644 bears the Phosphothreonine; by PLK2 mark. Residues 717–944 (STVEVATQLS…SQGSANATVL (228 aa)) enclose the Ras-GEF domain. Serine 806 bears the Phosphoserine; by PLK2 mark. At serine 930 the chain carries Phosphoserine. A phosphoserine; by PLK2 mark is found at serine 933 and serine 1022. A disordered region spans residues 1002–1051 (PATSTLPKNPGDKKPVKSETSPVAPRAGPQQKVQPQQPLAQPQPPHKVSQ). The segment covering 1030-1041 (PQQKVQPQQPLA) has biased composition (low complexity). Phosphoserine occurs at positions 1079, 1088, 1094, 1115, 1119, and 1158. The interval 1093 to 1159 (GSLERHRKQA…RSSIVSNSSF (67 aa)) is disordered. Composition is skewed to low complexity over residues 1110 to 1124 (SSQL…QSSP) and 1140 to 1159 (SDSG…NSSF). Serine 1175 is modified (phosphoserine; by PLK2). 3 disordered regions span residues 1224 to 1256 (STEE…SGSH), 1303 to 1369 (STKY…EEAK), and 1390 to 1496 (RKEG…VSAV). Basic and acidic residues predominate over residues 1227–1237 (ELSHDQGDRAS). Polar residues-rich tracts occupy residues 1246-1256 (GSWTSCSSGSH) and 1306-1330 (YNRQ…SSTG). Residues 1440 to 1455 (PTEAPAPGQTPPAAAA) show a composition bias toward low complexity. The segment covering 1485-1496 (AEEDEDEQVSAV) has biased composition (acidic residues).

Belongs to the RAPGEF2 family. In terms of assembly, found in a complex, at least composed of KIDINS220, MAGI2, NTRK1 and RAPGEF2; the complex is mainly formed at late endosomes in a neuronal growth factor (NGF)-dependent manner. Interacts (via C-terminal domain) with NEDD4 (via WW domains); this interaction leads to ubiquitination and degradation via the proteasome pathway in a cAMP-independent manner. Interacts with MAGI1 (via PDZ domain). Interacts with ADRB1 (via C-terminal PDZ motif); the interaction is direct. Interacts (via Ras-associating domain) with RAP1A (via GTP-bound active form). Interacts weakly with HRAS (via GDP- and GTP-bound forms). Interacts (via C-terminal domain) with MAGI2 (via PDZ and WW domains). Interacts with CDH1, CTNNB1 and TJP1. In terms of processing, ubiquitinated by NEDD4, leading to proteasomal degradation. Phosphorylation by PLK2 promotes its activity. As to expression, expressed in all layers of the cerebral cortex, hippocampus and cerebellum. Expressed in the cortical plate, cingulate cortex and the subventricular zone. Expressed in neurons and endocrine cells (at protein level). Expressed in melanoma cells.

Its subcellular location is the cytoplasm. The protein localises to the perinuclear region. The protein resides in the cell membrane. It localises to the late endosome. It is found in the cell junction. Functions as a guanine nucleotide exchange factor (GEF), which activates Rap and Ras family of small GTPases by exchanging bound GDP for free GTP in a cAMP-dependent manner. Serves as a link between cell surface receptors and Rap/Ras GTPases in intracellular signaling cascades. Also acts as an effector for Rap1 by direct association with Rap1-GTP thereby leading to the amplification of Rap1-mediated signaling. Shows weak activity on HRAS. It is controversial whether RAPGEF2 binds cAMP and cGMP or not. Its binding to ligand-activated beta-1 adrenergic receptor ADRB1 leads to the Ras activation through the G(s)-alpha signaling pathway. Involved in the cAMP-induced Ras and Erk1/2 signaling pathway that leads to sustained inhibition of long term melanogenesis by reducing dendrite extension and melanin synthesis. Also provides inhibitory signals for cell proliferation of melanoma cells and promotes their apoptosis in a cAMP-independent nanner. Regulates cAMP-induced neuritogenesis by mediating the Rap1/B-Raf/ERK signaling through a pathway that is independent on both PKA and RAPGEF3/RAPGEF4. Involved in neuron migration and in the formation of the major forebrain fiber connections forming the corpus callosum, the anterior commissure and the hippocampal commissure during brain development. Involved in neuronal growth factor (NGF)-induced sustained activation of Rap1 at late endosomes and in brain-derived neurotrophic factor (BDNF)-induced axon outgrowth of hippocampal neurons. Plays a role in the regulation of embryonic blood vessel formation and in the establishment of basal junction integrity and endothelial barrier function. May be involved in the regulation of the vascular endothelial growth factor receptor KDR and cadherin CDH5 expression at allantois endothelial cell-cell junctions. This chain is Rap guanine nucleotide exchange factor 2 (Rapgef2), found in Mus musculus (Mouse).